Consider the following 395-residue polypeptide: Levanbiose-producing levanase (395 aa).

Residue Asp-1 is part of the active site. Substrate is bound by residues 59 to 60, 124 to 125, Glu-173, and Trp-261; these read WT and RD.

It belongs to the glycosyl hydrolase 32 family.

The protein localises to the membrane. It catalyses the reaction Hydrolysis of (2-&gt;6)-beta-D-fructofuranan, to remove successive disaccharide residues as levanbiose, i.e. 6-(beta-D-fructofuranosyl)-D-fructose, from the end of the chain.. Catalyzes the degradation of levan mainly into levanbiose (difructose). Can also hydrolyze inulin. In Geobacillus stearothermophilus (Bacillus stearothermophilus), this protein is Levanbiose-producing levanase (levB).